We begin with the raw amino-acid sequence, 363 residues long: UDP-3-O-acylglucosamine N-acyltransferase (363 aa).

His-259 acts as the Proton acceptor in catalysis.

This sequence belongs to the transferase hexapeptide repeat family. LpxD subfamily. As to quaternary structure, homotrimer.

It carries out the reaction a UDP-3-O-[(3R)-3-hydroxyacyl]-alpha-D-glucosamine + a (3R)-hydroxyacyl-[ACP] = a UDP-2-N,3-O-bis[(3R)-3-hydroxyacyl]-alpha-D-glucosamine + holo-[ACP] + H(+). Its pathway is bacterial outer membrane biogenesis; LPS lipid A biosynthesis. Functionally, catalyzes the N-acylation of UDP-3-O-acylglucosamine using 3-hydroxyacyl-ACP as the acyl donor. Is involved in the biosynthesis of lipid A, a phosphorylated glycolipid that anchors the lipopolysaccharide to the outer membrane of the cell. This is UDP-3-O-acylglucosamine N-acyltransferase from Ruegeria pomeroyi (strain ATCC 700808 / DSM 15171 / DSS-3) (Silicibacter pomeroyi).